The primary structure comprises 156 residues: D-aminoacyl-tRNA deacylase (156 aa).

The Gly-cisPro motif, important for rejection of L-amino acids signature appears at 137 to 138 (GP).

This sequence belongs to the DTD family. Homodimer.

Its subcellular location is the cytoplasm. It catalyses the reaction glycyl-tRNA(Ala) + H2O = tRNA(Ala) + glycine + H(+). The catalysed reaction is a D-aminoacyl-tRNA + H2O = a tRNA + a D-alpha-amino acid + H(+). In terms of biological role, an aminoacyl-tRNA editing enzyme that deacylates mischarged D-aminoacyl-tRNAs. Also deacylates mischarged glycyl-tRNA(Ala), protecting cells against glycine mischarging by AlaRS. Acts via tRNA-based rather than protein-based catalysis; rejects L-amino acids rather than detecting D-amino acids in the active site. By recycling D-aminoacyl-tRNA to D-amino acids and free tRNA molecules, this enzyme counteracts the toxicity associated with the formation of D-aminoacyl-tRNA entities in vivo and helps enforce protein L-homochirality. The polypeptide is D-aminoacyl-tRNA deacylase (Ruegeria sp. (strain TM1040) (Silicibacter sp.)).